A 677-amino-acid chain; its full sequence is Fermitin family homolog 1 (677 aa).

The FERM domain maps to 96–653 (MLRLRLPNLK…HEYIGGYIFL (558 aa)). Residues Ser170, Ser179, and Ser361 each carry the phosphoserine modification. One can recognise a PH domain in the interval 337–433 (ESEVDEIEAA…EVVPNVNVAE (97 aa)).

It belongs to the kindlin family. In terms of assembly, interacts with the cytoplasmic domain of integrins ITGB1 and ITGB3.

Its subcellular location is the cytoplasm. It localises to the cytoskeleton. The protein localises to the cell junction. It is found in the focal adhesion. The protein resides in the cell projection. Its subcellular location is the ruffle membrane. Involved in cell adhesion. Contributes to integrin activation. When coexpressed with talin, potentiates activation of ITGA2B. Required for normal keratinocyte proliferation. Required for normal polarization of basal keratinocytes in skin, and for normal cell shape. Required for normal adhesion of keratinocytes to fibronectin and laminin, and for normal keratinocyte migration to wound sites. This Pongo abelii (Sumatran orangutan) protein is Fermitin family homolog 1 (FERMT1).